A 908-amino-acid polypeptide reads, in one-letter code: DNA mismatch repair protein MutS (908 aa).

662 to 669 (GPNMGGKS) contacts ATP.

The protein belongs to the DNA mismatch repair MutS family.

Its function is as follows. This protein is involved in the repair of mismatches in DNA. It is possible that it carries out the mismatch recognition step. This protein has a weak ATPase activity. The sequence is that of DNA mismatch repair protein MutS from Rhizobium johnstonii (strain DSM 114642 / LMG 32736 / 3841) (Rhizobium leguminosarum bv. viciae).